The chain runs to 281 residues: Probable endonuclease 4 (281 aa).

Zn(2+) contacts are provided by histidine 69, histidine 109, glutamate 145, aspartate 179, histidine 182, histidine 216, aspartate 229, histidine 231, and glutamate 261.

The protein belongs to the AP endonuclease 2 family. Requires Zn(2+) as cofactor.

It catalyses the reaction Endonucleolytic cleavage to 5'-phosphooligonucleotide end-products.. Functionally, endonuclease IV plays a role in DNA repair. It cleaves phosphodiester bonds at apurinic or apyrimidinic (AP) sites, generating a 3'-hydroxyl group and a 5'-terminal sugar phosphate. This is Probable endonuclease 4 from Nautilia profundicola (strain ATCC BAA-1463 / DSM 18972 / AmH).